The sequence spans 318 residues: Ribose-phosphate pyrophosphokinase 2 (318 aa).

An ATP-binding site is contributed by 96 to 101 (RQDKKD). 4 residues coordinate Mg(2+): D128, H130, D139, and D143. H130 serves as a coordination point for ATP. A binding of phosphoribosylpyrophosphate region spans residues 212-227 (KDRVAILVDDMADTCG).

Belongs to the ribose-phosphate pyrophosphokinase family. As to quaternary structure, homodimer. The active form is probably a hexamer composed of 3 homodimers. It depends on Mg(2+) as a cofactor.

The catalysed reaction is D-ribose 5-phosphate + ATP = 5-phospho-alpha-D-ribose 1-diphosphate + AMP + H(+). The protein operates within metabolic intermediate biosynthesis; 5-phospho-alpha-D-ribose 1-diphosphate biosynthesis; 5-phospho-alpha-D-ribose 1-diphosphate from D-ribose 5-phosphate (route I): step 1/1. With respect to regulation, activated by magnesium and inorganic phosphate. Functionally, catalyzes the synthesis of phosphoribosylpyrophosphate (PRPP) that is essential for nucleotide synthesis. This Rattus norvegicus (Rat) protein is Ribose-phosphate pyrophosphokinase 2 (Prps2).